A 100-amino-acid polypeptide reads, in one-letter code: Urease subunit gamma 2 (100 aa).

It belongs to the urease gamma subunit family. As to quaternary structure, heterotrimer of UreA (gamma), UreB (beta) and UreC (alpha) subunits. Three heterotrimers associate to form the active enzyme.

It is found in the cytoplasm. It carries out the reaction urea + 2 H2O + H(+) = hydrogencarbonate + 2 NH4(+). The protein operates within nitrogen metabolism; urea degradation; CO(2) and NH(3) from urea (urease route): step 1/1. Disrupting the ure2 operon has no effect on urease activity or pathogen survival in BALB/c mice when administered orally. The polypeptide is Urease subunit gamma 2 (Brucella abortus (strain 2308)).